Here is a 1083-residue protein sequence, read N- to C-terminus: FACT complex subunit spt16 (1083 aa).

Serine 437 is subject to Phosphoserine. Positions 466-504 (LESKLRNEINTEEKRKEHQRELAQQLNERAKDRLARQGN) form a coiled coil. The disordered stretch occupies residues 923–1083 (FEQGGWTFLD…NGHKSKKSRH (161 aa)). Positions 935–987 (SGSEGENETAESEEDEAYNPTDAESDEESDEDSEYSEASEDSEESDEDLGSDE) are enriched in acidic residues. Residues 988-1023 (ESGKDWSDLEREAAEEDRNHDYAADDKPRNGKFDSK) show a composition bias toward basic and acidic residues. The segment covering 1024–1033 (KHGKSSKHSP) has biased composition (basic residues). Residues 1058-1076 (SSKDKDRKRSRDDSRDNGH) show a composition bias toward basic and acidic residues.

It belongs to the peptidase M24 family. SPT16 subfamily. In terms of assembly, component of the FACT complex, a stable heterodimer of dre4/spt16 and Ssrp. Interacts with TRL/GAGA.

Its subcellular location is the nucleus. The protein resides in the chromosome. Component of the FACT complex, a general chromatin factor that acts to reorganize nucleosomes. The FACT complex is involved in multiple processes that require DNA as a template such as mRNA elongation, DNA replication and DNA repair. During transcription elongation the FACT complex acts as a histone chaperone that both destabilizes and restores nucleosomal structure. It facilitates the passage of RNA polymerase II and transcription by promoting the dissociation of one histone H2A-H2B dimer from the nucleosome, then subsequently promotes the reestablishment of the nucleosome following the passage of RNA polymerase II. The FACT complex is required for expression of Hox genes. In Drosophila melanogaster (Fruit fly), this protein is FACT complex subunit spt16 (dre4).